The following is a 439-amino-acid chain: Xylose isomerase (439 aa).

Active-site residues include histidine 99 and aspartate 102. Glutamate 230, glutamate 266, histidine 269, aspartate 294, aspartate 305, aspartate 307, and aspartate 337 together coordinate Mg(2+).

The protein belongs to the xylose isomerase family. As to quaternary structure, homotetramer. Requires Mg(2+) as cofactor.

The protein resides in the cytoplasm. The enzyme catalyses alpha-D-xylose = alpha-D-xylulofuranose. In Oceanobacillus iheyensis (strain DSM 14371 / CIP 107618 / JCM 11309 / KCTC 3954 / HTE831), this protein is Xylose isomerase.